A 165-amino-acid chain; its full sequence is UPF0303 protein BMA1246 (165 aa).

This sequence belongs to the UPF0303 family.

The chain is UPF0303 protein BMA1246 from Burkholderia mallei (strain ATCC 23344).